The primary structure comprises 350 residues: Protein-glutamate methylesterase/protein-glutamine glutaminase 6 (350 aa).

The 116-residue stretch at 11–126 folds into the Response regulatory domain; sequence RVLVVDDSAA…LAPVREELLE (116 aa). The residue at position 62 (aspartate 62) is a 4-aspartylphosphate. One can recognise a CheB-type methylesterase domain in the interval 150–347; sequence ELEPARVAVV…ARLVEFARDA (198 aa). Residues serine 162, histidine 189, and aspartate 289 contribute to the active site.

Belongs to the CheB family. Phosphorylated by CheA. Phosphorylation of the N-terminal regulatory domain activates the methylesterase activity.

Its subcellular location is the cytoplasm. It catalyses the reaction [protein]-L-glutamate 5-O-methyl ester + H2O = L-glutamyl-[protein] + methanol + H(+). It carries out the reaction L-glutaminyl-[protein] + H2O = L-glutamyl-[protein] + NH4(+). Functionally, involved in chemotaxis. Part of a chemotaxis signal transduction system that modulates chemotaxis in response to various stimuli. Catalyzes the demethylation of specific methylglutamate residues introduced into the chemoreceptors (methyl-accepting chemotaxis proteins or MCP) by CheR. Also mediates the irreversible deamidation of specific glutamine residues to glutamic acid. The chain is Protein-glutamate methylesterase/protein-glutamine glutaminase 6 from Anaeromyxobacter dehalogenans (strain 2CP-C).